Here is an 884-residue protein sequence, read N- to C-terminus: MELRCGGLLFSSRFDSGNLAHVEKVDSVSGDGEGGAAGASAPFSSIASSPDYEFNVWTRPDCAETEFENGNRSWFYFSVRGGTPGKLIKINIMNMNKQSKLYSQGMAPFVRTLPTRPRWERIRDRPTFEMTETQFVLSFVHRFVEGRGATTFFAFCYPFSYSDCQDLLNQLDQRFLENHPTHSSPLDTIYYHREILCYSLDGLRVDLLTITSCHGLREDREPRLQQLFPDTGTPRPFCFTGKRIFFLSSRVHPGETPSSFVFNGFLDFILRPDDPRAQTLRRLFVFKLIPMLNPDGVVRGHYRTDSRGVNLNRQYLKPDAALHPAIYGAKAVLLYHHVHSRLHPQSPSEHQHSPCLPPDAPLSDLEKANHLRNEAHLGHTSDGDSPEDWTQTRPAEQKASGVWLMPQQCADAEQPAPDTIPPKESGVAYYVDLHGHASKRGCFMYGNSFSDESTQVENMLYPKLISLNSAHFDFQGCNFSEKNMYARDRRDGQSKEGSGRVAIYKASGIIHSYTLECNYNTGRSVNSIPAACHDNGRASPPPPPAFPSRYTVELFEQVGRAMAIAALDMAECNPWPRIVLSEHSSLTNLRAWMLKHVRSSRGLSSTVSGAVNKKRGSRTPPRSNSGLPVSCSENPLSRARSFSTGTSAGGSSSSQQNSPQMKNSPSFPFHGSRPTGLPGLGSSTQKVSHRVLGPVREPRSQDRRRRQQPLTHRPTSSSLAPSPNPTSSSPASSHSTGPCLLPSAFSVSGSSCSLLSSGDKPEAVMVIGKGLLGPRIPCIRTRLQVRPRLGQGSPPTCRGMSGSSGPTSPIPRTRESSEPEPGPHSAPGLPQAGPPRPRSAPAFSPISCSLSDSQSRICYSGGPLGQPEVCFGPKSPPLTVSPRV.

The 414-residue stretch at 157–570 (YPFSYSDCQD…AMAIAALDMA (414 aa)) folds into the Peptidase M14 domain. Residues His252 and Glu255 each coordinate Zn(2+). Disordered regions lie at residues 343 to 364 (HPQS…PLSD) and 376 to 401 (HLGH…KASG). His434 is a binding site for Zn(2+). Catalysis depends on Glu516, which acts as the Proton donor/acceptor. Disordered stretches follow at residues 603 to 737 (LSST…HSTG) and 784 to 859 (QVRP…RICY). Over residues 620–635 (PPRSNSGLPVSCSENP) the composition is skewed to polar residues. 2 stretches are compositionally biased toward low complexity: residues 641–666 (SFST…NSPS) and 714–737 (PTSS…HSTG). Ser839 bears the Phosphoserine mark. Positions 846–857 (ISCSLSDSQSRI) are enriched in polar residues.

The protein belongs to the peptidase M14 family. Zn(2+) serves as cofactor.

It is found in the cytoplasm. The protein resides in the cytosol. Its subcellular location is the nucleus. It localises to the cytoskeleton. The protein localises to the spindle. It is found in the midbody. The catalysed reaction is gamma-L-glutamyl-L-glutamyl-[protein] + H2O = L-glutamyl-[protein] + L-glutamate. It carries out the reaction (L-glutamyl)(n+1)-gamma-L-glutamyl-L-glutamyl-[protein] + H2O = (L-glutamyl)(n)-gamma-L-glutamyl-L-glutamyl-[protein] + L-glutamate. It catalyses the reaction C-terminal L-alpha-aminoacyl-L-glutamyl-[tubulin] + H2O = C-terminal L-alpha-aminoacyl-[tubulin] + L-glutamate. The enzyme catalyses C-terminal L-alpha-aminoacyl-L-glutamyl-L-glutamyl-[tubulin] + H2O = C-terminal L-alpha-aminoacyl-L-glutamyl-[tubulin] + L-glutamate. Metallocarboxypeptidase that mediates deglutamylation of tubulin and non-tubulin target proteins. Catalyzes the removal of polyglutamate side chains present on the gamma-carboxyl group of glutamate residues within the C-terminal tail of alpha- and beta-tubulin. Cleaves alpha- and gamma-linked polyglutamate tubulin side-chain, as well as the branching point glutamate. Also catalyzes the removal of alpha-linked glutamate residues from the carboxy-terminus of alpha-tubulin. Mediates deglutamylation of nucleotidyltransferase CGAS, leading to CGAS antiviral defense response activation. The chain is Cytosolic carboxypeptidase-like protein 5 (AGBL5) from Ailuropoda melanoleuca (Giant panda).